A 311-amino-acid chain; its full sequence is Methionyl-tRNA formyltransferase (311 aa).

110–113 is a (6S)-5,6,7,8-tetrahydrofolate binding site; it reads SLLP.

The protein belongs to the Fmt family.

The catalysed reaction is L-methionyl-tRNA(fMet) + (6R)-10-formyltetrahydrofolate = N-formyl-L-methionyl-tRNA(fMet) + (6S)-5,6,7,8-tetrahydrofolate + H(+). In terms of biological role, attaches a formyl group to the free amino group of methionyl-tRNA(fMet). The formyl group appears to play a dual role in the initiator identity of N-formylmethionyl-tRNA by promoting its recognition by IF2 and preventing the misappropriation of this tRNA by the elongation apparatus. The sequence is that of Methionyl-tRNA formyltransferase from Streptococcus uberis (strain ATCC BAA-854 / 0140J).